The primary structure comprises 347 residues: uncharacterized protein (347 aa).

The RING-type zinc-finger motif lies at cysteine 5–arginine 44. The WWE domain maps to asparagine 244 to arginine 321.

This is an uncharacterized protein from Caenorhabditis elegans.